Here is a 300-residue protein sequence, read N- to C-terminus: 4-hydroxy-tetrahydrodipicolinate synthase (300 aa).

Thr-53 lines the pyruvate pocket. Tyr-141 acts as the Proton donor/acceptor in catalysis. Residue Lys-169 is the Schiff-base intermediate with substrate of the active site. Thr-211 contributes to the pyruvate binding site.

It belongs to the DapA family. Homotetramer; dimer of dimers.

It is found in the cytoplasm. It catalyses the reaction L-aspartate 4-semialdehyde + pyruvate = (2S,4S)-4-hydroxy-2,3,4,5-tetrahydrodipicolinate + H2O + H(+). It participates in amino-acid biosynthesis; L-lysine biosynthesis via DAP pathway; (S)-tetrahydrodipicolinate from L-aspartate: step 3/4. Catalyzes the condensation of (S)-aspartate-beta-semialdehyde [(S)-ASA] and pyruvate to 4-hydroxy-tetrahydrodipicolinate (HTPA). The polypeptide is 4-hydroxy-tetrahydrodipicolinate synthase (Rickettsia massiliae (strain Mtu5)).